We begin with the raw amino-acid sequence, 104 residues long: NADH dehydrogenase [ubiquinone] flavoprotein 3, mitochondrial (104 aa).

Residues 1–35 constitute a mitochondrion transit peptide; it reads MAVSLLLRGGRIRALKAVLLEARVFPGELVSVVRL. The span at 38 to 50 shows a compositional bias: basic and acidic residues; that stretch reads ESEKSAKEKELHP. The segment at 38 to 68 is disordered; it reads ESEKSAKEKELHPKTQSVLKEPEPTDTTTYK. At S101 the chain carries Phosphoserine.

This sequence belongs to the complex I NDUFV3 subunit family. Complex I is composed of 45 different subunits. This is a component of the flavoprotein-sulfur (FP) fragment of the enzyme.

Its subcellular location is the mitochondrion inner membrane. In terms of biological role, accessory subunit of the mitochondrial membrane respiratory chain NADH dehydrogenase (Complex I), that is believed not to be involved in catalysis. Complex I functions in the transfer of electrons from NADH to the respiratory chain. The immediate electron acceptor for the enzyme is believed to be ubiquinone. May be the terminally assembled subunit of Complex I. The chain is NADH dehydrogenase [ubiquinone] flavoprotein 3, mitochondrial (Ndufv3) from Mus musculus (Mouse).